The primary structure comprises 337 residues: Glycine N(alpha)-acyltransferase (337 aa).

This sequence belongs to the acetyltransferase family.

The catalysed reaction is a (3R)-hydroxyacyl-[ACP] + glycine = a lyso-glycine lipid + holo-[ACP] + H(+). The enzyme catalyses (3R)-hydroxyhexadecanoyl-[ACP] + glycine = N-[(3R)-3-hydroxyhexadecanoyl]-glycine + holo-[ACP] + H(+). Its pathway is lipid metabolism. In terms of biological role, is involved in the production of glycine lipids (GL), which are phosphorus-free membrane lipids important for fitness during growth of the human gut bacterium B.thetaiotaomicron in vivo and in vitro. Catalyzes the first step of GL biosynthesis, i.e. the N-acylation of glycine via addition of a 3-hydroxy fatty acyl group, to form a range of monoacylated glycine (also named lyso-glycine lipids or lyso-GL). Is important for the ability of B.thetaiotaomicron to adapt to stress and colonize the mammalian gut. Also seems to be required for the production of flavolipin, an acylated serine-glycine dipeptide. The chain is Glycine N(alpha)-acyltransferase from Bacteroides thetaiotaomicron (strain ATCC 29148 / DSM 2079 / JCM 5827 / CCUG 10774 / NCTC 10582 / VPI-5482 / E50).